The sequence spans 350 residues: uncharacterized protein (350 aa).

Disordered stretches follow at residues 1–21 (MDSF…SSLN), 237–266 (NSDV…PISP), and 278–298 (EMST…KKRT). Composition is skewed to polar residues over residues 10-21 (KPTTATSNSSLN) and 246-259 (EDSS…TKPS). A compositionally biased stretch (basic residues) spans 287–298 (SRSRTPSSKKRT).

The protein localises to the nucleus. This is an uncharacterized protein from Schizosaccharomyces pombe (strain 972 / ATCC 24843) (Fission yeast).